We begin with the raw amino-acid sequence, 410 residues long: Pyruvate dehydrogenase complex protein X component, mitochondrial (410 aa).

A mitochondrion-targeting transit peptide spans 1 to 30 (MLSAISKVSTLKSCTRYLTKCNYHASAKLL). The 77-residue stretch at 32–108 (VKTFSMPAMS…DVGEPIAYIA (77 aa)) folds into the Lipoyl-binding domain. Lysine 73 carries the N6-lipoyllysine modification. A Peripheral subunit-binding (PSBD) domain is found at 169 to 210 (TLLPSVSLLLAENNISKQKALKEIAPSGSNGRLLKGDVLAYL).

The protein belongs to the 2-oxoacid dehydrogenase family. As to quaternary structure, eukaryotic pyruvate dehydrogenase (PDH) complexes are organized as a core consisting of the oligomeric dihydrolipoamide acetyl-transferase (E2), around which are arranged multiple copies of pyruvate dehydrogenase (E1), dihydrolipoamide dehydrogenase (E3) and protein X (E3BP) bound by non-covalent bonds.

The protein resides in the mitochondrion matrix. In terms of biological role, required for anchoring dihydrolipoamide dehydrogenase (E3) to the dihydrolipoamide transacetylase (E2) core of the pyruvate dehydrogenase complexes of eukaryotes. This specific binding is essential for a functional PDH complex. This is Pyruvate dehydrogenase complex protein X component, mitochondrial (PDX1) from Saccharomyces cerevisiae (strain ATCC 204508 / S288c) (Baker's yeast).